A 273-amino-acid polypeptide reads, in one-letter code: Shikimate dehydrogenase (NADP(+)) (273 aa).

Shikimate-binding positions include 19-21 (SKS) and Thr66. Lys70 serves as the catalytic Proton acceptor. Residues Asn91 and Asp107 each coordinate shikimate. NADP(+) is bound by residues 131–135 (GAGGA) and Met218. A shikimate-binding site is contributed by Tyr220. An NADP(+)-binding site is contributed by Gly242.

The protein belongs to the shikimate dehydrogenase family. As to quaternary structure, homodimer.

The catalysed reaction is shikimate + NADP(+) = 3-dehydroshikimate + NADPH + H(+). It functions in the pathway metabolic intermediate biosynthesis; chorismate biosynthesis; chorismate from D-erythrose 4-phosphate and phosphoenolpyruvate: step 4/7. Functionally, involved in the biosynthesis of the chorismate, which leads to the biosynthesis of aromatic amino acids. Catalyzes the reversible NADPH linked reduction of 3-dehydroshikimate (DHSA) to yield shikimate (SA). The chain is Shikimate dehydrogenase (NADP(+)) from Buchnera aphidicola subsp. Acyrthosiphon pisum (strain 5A).